A 243-amino-acid chain; its full sequence is tRNA (guanine-N(1)-)-methyltransferase (243 aa).

S-adenosyl-L-methionine is bound by residues Gly110 and 130 to 135; that span reads VGDYVM.

Belongs to the RNA methyltransferase TrmD family. As to quaternary structure, homodimer.

The protein resides in the cytoplasm. It catalyses the reaction guanosine(37) in tRNA + S-adenosyl-L-methionine = N(1)-methylguanosine(37) in tRNA + S-adenosyl-L-homocysteine + H(+). Functionally, specifically methylates guanosine-37 in various tRNAs. The sequence is that of tRNA (guanine-N(1)-)-methyltransferase from Treponema denticola (strain ATCC 35405 / DSM 14222 / CIP 103919 / JCM 8153 / KCTC 15104).